We begin with the raw amino-acid sequence, 396 residues long: Transcription factor E2FC (396 aa).

Over residues 34 to 48 (PRYSSLTPSSTNRPF) the composition is skewed to polar residues. The disordered stretch occupies residues 34–57 (PRYSSLTPSSTNRPFSVSQSLPNS). Residues 155–220 (RYDSSLGLLT…TTKNHIRWKG (66 aa)) mediate DNA binding. Positions 226–268 (QKDLGDQISRLKSEVESMQSEESRLDDLIRERQEALRSLEEDD) form a coiled coil. Positions 236-264 (LKSEVESMQSEESRLDDLIRERQEALRSL) are leucine-zipper. A retinoblastoma protein binding region spans residues 376 to 391 (DYWFESDAEVSLTDLW).

This sequence belongs to the E2F/DP family. In terms of assembly, heterodimer with DP proteins. Interacts preferentially with DPB, but also with DPA. No interaction with DPB when phosphorylated. Interacts with SKP2A, CDKA-1 and maize retinoblastoma-related protein RBR1. Component of a DREAM-like complex which modulates a variety of developmentally regulated genes and of the mitotic genes in proliferating and differentiated cells. Interacts with MYB3R3 at later stages of leaves development. In terms of processing, phosphorylated by cyclin-dependent kinase. Phosphorylation is necessary to target E2FC for proteolysis. Expressed in meristematic areas, vascular tissues, apical part of the roots, cotyledons, upper region of the hypocotyls, trichomes, young flower buds and pollen grains.

The protein resides in the cytoplasm. Its function is as follows. Involved in transcriptional repression. May act by repressing E2F-regulated genes in mature differentiated cells, but is not an antagonist of E2FA. Restricts cell division and is involved in the coordination between cell proliferation and endoreduplication during development. May play a role during the transition from skotomorphogenesis to photomorphogenesis. Regulated by phosphorylation-dependent proteolysis via the protein-ubiquitin ligase SCF(SKP2A) complex. This is Transcription factor E2FC (E2FC) from Arabidopsis thaliana (Mouse-ear cress).